We begin with the raw amino-acid sequence, 308 residues long: Glutamyl-Q tRNA(Asp) synthetase (308 aa).

Residues 19–23 and Glu55 contribute to the L-glutamate site; that span reads RFAPS. The 'HIGH' region motif lies at 22–32; it reads PSPSGELHFGS. Positions 111, 113, 125, and 129 each coordinate Zn(2+). L-glutamate is bound by residues Tyr182 and Arg200. The short motif at 238–242 is the 'KMSKS' region element; sequence KLSKQ. Lys241 contacts ATP.

The protein belongs to the class-I aminoacyl-tRNA synthetase family. GluQ subfamily. Requires Zn(2+) as cofactor.

Functionally, catalyzes the tRNA-independent activation of glutamate in presence of ATP and the subsequent transfer of glutamate onto a tRNA(Asp). Glutamate is transferred on the 2-amino-5-(4,5-dihydroxy-2-cyclopenten-1-yl) moiety of the queuosine in the wobble position of the QUC anticodon. This chain is Glutamyl-Q tRNA(Asp) synthetase, found in Shigella flexneri.